Consider the following 303-residue polypeptide: 5-dehydro-4-deoxyglucarate dehydratase (303 aa).

The protein belongs to the DapA family.

The enzyme catalyses 5-dehydro-4-deoxy-D-glucarate + H(+) = 2,5-dioxopentanoate + CO2 + H2O. It functions in the pathway carbohydrate acid metabolism; D-glucarate degradation; 2,5-dioxopentanoate from D-glucarate: step 2/2. The sequence is that of 5-dehydro-4-deoxyglucarate dehydratase from Pseudomonas putida (Arthrobacter siderocapsulatus).